The following is a 503-amino-acid chain: Probable DNA ligase (503 aa).

Residue glutamate 210 coordinates ATP. Catalysis depends on lysine 212, which acts as the N6-AMP-lysine intermediate. ATP-binding residues include arginine 217, arginine 232, glutamate 261, phenylalanine 296, arginine 367, and lysine 373.

The protein belongs to the ATP-dependent DNA ligase family. The cofactor is Mg(2+).

It catalyses the reaction ATP + (deoxyribonucleotide)n-3'-hydroxyl + 5'-phospho-(deoxyribonucleotide)m = (deoxyribonucleotide)n+m + AMP + diphosphate.. In terms of biological role, DNA ligase that seals nicks in double-stranded DNA during DNA replication, DNA recombination and DNA repair. The sequence is that of Probable DNA ligase from Rhodococcus opacus (strain B4).